Consider the following 134-residue polypeptide: Small ribosomal subunit protein uS11 (134 aa).

This sequence belongs to the universal ribosomal protein uS11 family. In terms of assembly, part of the 30S ribosomal subunit. Interacts with proteins S7 and S18. Binds to IF-3.

In terms of biological role, located on the platform of the 30S subunit, it bridges several disparate RNA helices of the 16S rRNA. Forms part of the Shine-Dalgarno cleft in the 70S ribosome. The sequence is that of Small ribosomal subunit protein uS11 from Herminiimonas arsenicoxydans.